The sequence spans 616 residues: Protein RIK (616 aa).

Over residues 1 to 11 the composition is skewed to basic and acidic residues; that stretch reads MTEDRAHKVAD. The tract at residues 1–32 is disordered; sequence MTEDRAHKVADEPAASGRQSPERKKRKWDQPA. A KH domain is found at 198–304; that stretch reads GTTSESISVP…AKVLAENLLD (107 aa). Polar residues-rich tracts occupy residues 432 to 449, 475 to 484, and 491 to 502; these read TQAV…TKGN, TESQNSQQGS, and LDSSGNIGSSSI. Disordered regions lie at residues 432 to 455 and 467 to 616; these read TQAV…LDAE and LPVS…HTCV. A compositionally biased stretch (pro residues) spans 534–564; it reads LPPPLKSMLPLPPRSMPPPPPKSMPPPPPKF. Composition is skewed to basic and acidic residues over residues 565–575 and 598–610; these read PSDEFLSRNEN and SERR…EEKN.

As to quaternary structure, interacts with RS2. As to expression, expressed in vegetative tissues. More abundant in apices and young leaf primordia than in fully expanded leaf tissues.

The protein resides in the nucleus. In Zea mays (Maize), this protein is Protein RIK.